The chain runs to 71 residues: MPSVKVKENEPVDIAIRRFKRACEKAGVLSDVRKREFYEKPTQERKRKKAAAVKRYKKKLQRESIRTTRMY.

The span at 48-60 (KKAAAVKRYKKKL) shows a compositional bias: basic residues. The interval 48–71 (KKAAAVKRYKKKLQRESIRTTRMY) is disordered. The segment covering 61 to 71 (QRESIRTTRMY) has biased composition (basic and acidic residues).

The protein belongs to the bacterial ribosomal protein bS21 family.

This chain is Small ribosomal subunit protein bS21, found in Psychrobacter sp. (strain PRwf-1).